The chain runs to 349 residues: tRNA N6-adenosine threonylcarbamoyltransferase (349 aa).

His-114 and His-118 together coordinate Fe cation. Residues 136 to 140 (IMSGG), Asp-169, Gly-182, and Asn-280 each bind substrate. Fe cation is bound at residue Asp-308.

This sequence belongs to the KAE1 / TsaD family. Fe(2+) is required as a cofactor.

Its subcellular location is the cytoplasm. It carries out the reaction L-threonylcarbamoyladenylate + adenosine(37) in tRNA = N(6)-L-threonylcarbamoyladenosine(37) in tRNA + AMP + H(+). Functionally, required for the formation of a threonylcarbamoyl group on adenosine at position 37 (t(6)A37) in tRNAs that read codons beginning with adenine. Is involved in the transfer of the threonylcarbamoyl moiety of threonylcarbamoyl-AMP (TC-AMP) to the N6 group of A37, together with TsaE and TsaB. TsaD likely plays a direct catalytic role in this reaction. This Ehrlichia chaffeensis (strain ATCC CRL-10679 / Arkansas) protein is tRNA N6-adenosine threonylcarbamoyltransferase.